The chain runs to 359 residues: Membrane-bound lytic murein transglycosylase C (359 aa).

The signal sequence occupies residues 1 to 16 (MKKYLALALIAPLLIS). The N-palmitoyl cysteine moiety is linked to residue Cys17. Cys17 is lipidated: S-diacylglycerol cysteine.

This sequence belongs to the transglycosylase Slt family.

It localises to the cell outer membrane. It catalyses the reaction Exolytic cleavage of the (1-&gt;4)-beta-glycosidic linkage between N-acetylmuramic acid (MurNAc) and N-acetylglucosamine (GlcNAc) residues in peptidoglycan, from either the reducing or the non-reducing ends of the peptidoglycan chains, with concomitant formation of a 1,6-anhydrobond in the MurNAc residue.. In terms of biological role, murein-degrading enzyme. May play a role in recycling of muropeptides during cell elongation and/or cell division. This is Membrane-bound lytic murein transglycosylase C from Escherichia fergusonii (strain ATCC 35469 / DSM 13698 / CCUG 18766 / IAM 14443 / JCM 21226 / LMG 7866 / NBRC 102419 / NCTC 12128 / CDC 0568-73).